The chain runs to 151 residues: Type 4 adapter protein IcmW (151 aa).

In terms of assembly, the T4BSS is a complex nanomachine composed of several subcomplexes. This subunit is part of the Type IV Coupling Complex (T4CC), a subcomplex composed of the DotLMNYZ core and the IcmSW-LvgA adapter subunits, linked by the C-terminal tail of DotL. Interacts with IcmS. IcmS and IcmW form a stable complex. Interaction with IcmS greatly enhances the stability of IcmW. Interacts directly with the type 4 coupling protein DotL. Interacts with LvgA. Interacts with effector proteins.

The protein localises to the cytoplasm. Interaction with DotL is critical for the export of IcmSW-dependent substrates. In terms of biological role, component of the Dot/Icm type IVB secretion system (T4BSS), which is used to inject bacterial effector proteins into eukaryotic host cells. Part of a subcomplex which recruits effector proteins and delivers them to the core transmembrane subcomplex. The IcmS/IcmW protein complex plays an important role in protein translocation by interacting with multiple Dot/Icm effector proteins to facilitate their translocation into host cells. Interaction promotes conformational changes in the effector protein, which may facilitate display of a C-terminal translocation signal. May maintain the substrates in a translocation competent form. Required for intracellular growth in host cells, replicative phagosome formation and phagosome trafficking. This chain is Type 4 adapter protein IcmW, found in Legionella pneumophila subsp. pneumophila (strain Philadelphia 1 / ATCC 33152 / DSM 7513).